The chain runs to 188 residues: Gamma-glutamylcyclotransferase (188 aa).

A substrate-binding site is contributed by 19–24 (YFAYGS). Residue E98 is the Proton acceptor of the active site. Y139 contributes to the substrate binding site. Residue S173 is modified to Phosphoserine.

This sequence belongs to the gamma-glutamylcyclotransferase family. As to quaternary structure, homodimer.

It catalyses the reaction an alpha-(gamma-L-glutamyl)-L-amino acid = 5-oxo-L-proline + an L-alpha-amino acid. Its function is as follows. Catalyzes the formation of 5-oxoproline from gamma-glutamyl dipeptides and may play a significant role in glutathione homeostasis. Induces release of cytochrome c from mitochondria with resultant induction of apoptosis. This is Gamma-glutamylcyclotransferase from Homo sapiens (Human).